A 383-amino-acid chain; its full sequence is Cell division protein FtsZ (383 aa).

Residues 20-24 (GGGGN), 107-109 (GTG), glutamate 138, arginine 142, and asparagine 186 each bind GTP.

This sequence belongs to the FtsZ family. In terms of assembly, homodimer. Polymerizes to form a dynamic ring structure in a strictly GTP-dependent manner. Interacts directly with several other division proteins.

It is found in the cytoplasm. Functionally, essential cell division protein that forms a contractile ring structure (Z ring) at the future cell division site. The regulation of the ring assembly controls the timing and the location of cell division. One of the functions of the FtsZ ring is to recruit other cell division proteins to the septum to produce a new cell wall between the dividing cells. Binds GTP and shows GTPase activity. The polypeptide is Cell division protein FtsZ (Escherichia coli O157:H7).